We begin with the raw amino-acid sequence, 105 residues long: Small ribosomal subunit protein eS26 (105 aa).

The protein belongs to the eukaryotic ribosomal protein eS26 family. In terms of assembly, component of the small ribosomal subunit.

The protein localises to the cytoplasm. This Encephalitozoon cuniculi (strain GB-M1) (Microsporidian parasite) protein is Small ribosomal subunit protein eS26 (RPS26).